The primary structure comprises 224 residues: LexA repressor (224 aa).

Positions 31–51 form a DNA-binding region, H-T-H motif; it reads RAEIANTLGFKSANAAEEHLQ. Catalysis depends on for autocatalytic cleavage activity residues Ser142 and Lys179.

The protein belongs to the peptidase S24 family. As to quaternary structure, homodimer.

It catalyses the reaction Hydrolysis of Ala-|-Gly bond in repressor LexA.. Functionally, represses a number of genes involved in the response to DNA damage (SOS response), including recA and lexA. In the presence of single-stranded DNA, RecA interacts with LexA causing an autocatalytic cleavage which disrupts the DNA-binding part of LexA, leading to derepression of the SOS regulon and eventually DNA repair. In Delftia acidovorans (strain DSM 14801 / SPH-1), this protein is LexA repressor.